The primary structure comprises 383 residues: 1-deoxy-D-xylulose 5-phosphate reductoisomerase (383 aa).

NADPH is bound by residues threonine 10, glycine 11, serine 12, isoleucine 13, and asparagine 123. Lysine 124 is a binding site for 1-deoxy-D-xylulose 5-phosphate. Glutamate 125 serves as a coordination point for NADPH. Aspartate 149 is a binding site for Mn(2+). 1-deoxy-D-xylulose 5-phosphate contacts are provided by serine 150, glutamate 151, serine 175, and histidine 198. Position 151 (glutamate 151) interacts with Mn(2+). An NADPH-binding site is contributed by glycine 204. Serine 211, asparagine 216, lysine 217, and glutamate 220 together coordinate 1-deoxy-D-xylulose 5-phosphate. Glutamate 220 provides a ligand contact to Mn(2+).

It belongs to the DXR family. Mg(2+) is required as a cofactor. It depends on Mn(2+) as a cofactor.

The enzyme catalyses 2-C-methyl-D-erythritol 4-phosphate + NADP(+) = 1-deoxy-D-xylulose 5-phosphate + NADPH + H(+). Its pathway is isoprenoid biosynthesis; isopentenyl diphosphate biosynthesis via DXP pathway; isopentenyl diphosphate from 1-deoxy-D-xylulose 5-phosphate: step 1/6. Its function is as follows. Catalyzes the NADPH-dependent rearrangement and reduction of 1-deoxy-D-xylulose-5-phosphate (DXP) to 2-C-methyl-D-erythritol 4-phosphate (MEP). This chain is 1-deoxy-D-xylulose 5-phosphate reductoisomerase, found in Desulfosudis oleivorans (strain DSM 6200 / JCM 39069 / Hxd3) (Desulfococcus oleovorans).